The sequence spans 365 residues: Pheromone M-factor receptor (365 aa).

Transmembrane regions (helical) follow at residues 7 to 24, 31 to 54, 73 to 100, 116 to 133, 155 to 182, 204 to 226, and 265 to 283; these read FYQFYAYFALVLSIPILY, NIPCLLLLFWLTLTTLIYVVESAI, ITSRIVTCSSIGIPASAFTLVLYLDTVI, VCLSILLPLIIMAMMVPL, YTLLFFYIPPCLLSFGGLFFVSRIVVLY, FLRLLCLAAVFFLGYFPLTIFMV, and VPPTVLYLMSLFFSTSGGW.

It belongs to the G-protein coupled receptor 4 family.

The protein localises to the membrane. Functionally, receptor for the peptide pheromone M-factor, a mating factor of S.pombe. Pheromone signaling is essential for initiation of meiosis in S.pombe; M-factor signaling alone may be sufficient. This is Pheromone M-factor receptor (map3) from Schizosaccharomyces pombe (strain 972 / ATCC 24843) (Fission yeast).